Consider the following 903-residue polypeptide: Translation initiation factor IF-2 (903 aa).

Positions 66 to 296 (QATLKGEGPV…GRSRKREMEN (231 aa)) are disordered. Residues 121-132 (NTDETRVQEHKP) are compositionally biased toward basic and acidic residues. Low complexity-rich tracts occupy residues 139 to 152 (AGDA…AAAG) and 178 to 195 (AATG…GQQS). A compositionally biased stretch (basic and acidic residues) spans 204–231 (EGRSRQDENKGSAREDQANRFATRDKEA). A compositionally biased stretch (basic residues) spans 246–255 (RRPAHSKPLR). 2 stretches are compositionally biased toward basic and acidic residues: residues 263 to 276 (VTKD…DRSN) and 285 to 296 (ESGRSRKREMEN). Residues 403 to 572 (ERPPVVTVMG…LLTADVAELK (170 aa)) enclose the tr-type G domain. Residues 412–419 (GHVDHGKT) form a G1 region. Position 412-419 (412-419 (GHVDHGKT)) interacts with GTP. The interval 437–441 (GITQH) is G2. The interval 458 to 461 (DTPG) is G3. GTP contacts are provided by residues 458 to 462 (DTPGH) and 512 to 515 (NKID). Residues 512–515 (NKID) are G4. The segment at 548-550 (SAV) is G5.

Belongs to the TRAFAC class translation factor GTPase superfamily. Classic translation factor GTPase family. IF-2 subfamily.

Its subcellular location is the cytoplasm. Its function is as follows. One of the essential components for the initiation of protein synthesis. Protects formylmethionyl-tRNA from spontaneous hydrolysis and promotes its binding to the 30S ribosomal subunits. Also involved in the hydrolysis of GTP during the formation of the 70S ribosomal complex. This Moorella thermoacetica (strain ATCC 39073 / JCM 9320) protein is Translation initiation factor IF-2.